The chain runs to 422 residues: Kynurenine--oxoglutarate transaminase 1 (422 aa).

Substrate-binding residues include Gly-36 and Asn-185. An N6-(pyridoxal phosphate)lysine modification is found at Lys-247. Arg-398 contacts substrate.

It belongs to the class-I pyridoxal-phosphate-dependent aminotransferase family. In terms of assembly, homodimer. Pyridoxal 5'-phosphate serves as cofactor.

It localises to the cytoplasm. It is found in the cytosol. The catalysed reaction is L-kynurenine + 2-oxoglutarate = kynurenate + L-glutamate + H2O. It carries out the reaction 3-phenylpyruvate + L-glutamine = 2-oxoglutaramate + L-phenylalanine. The enzyme catalyses an S-substituted L-cysteine + H2O = a thiol + pyruvate + NH4(+). The protein operates within amino-acid degradation; L-kynurenine degradation; kynurenate from L-kynurenine: step 1/2. With respect to regulation, inhibited by tryptophan, indole-3-pyruvic acid, 3-indolepropionic acid, DL-indole-3-lactic acid, indole-3-acetic acid (IAC), amino-oxyacetate (AOAA), aminooxy-phenylpropionic acid (AOPP) and Tris. Its function is as follows. Catalyzes the irreversible transamination of the L-tryptophan metabolite L-kynurenine to form kynurenic acid (KA), an intermediate in the tryptophan catabolic pathway which is also a broad spectrum antagonist of the three ionotropic excitatory amino acid receptors among others. Also metabolizes the cysteine conjugates of certain halogenated alkenes and alkanes to form reactive metabolites. Catalyzes the beta-elimination of S-conjugates and Se-conjugates of L-(seleno)cysteine, resulting in the cleavage of the C-S or C-Se bond. This is Kynurenine--oxoglutarate transaminase 1 from Homo sapiens (Human).